The sequence spans 413 residues: Aminopeptidase 2 (413 aa).

6 residues coordinate a divalent metal cation: glutamate 250, glutamate 316, glutamate 340, histidine 345, histidine 378, and aspartate 380.

Belongs to the peptidase M29 family. Homodimer. Requires Co(2+) as cofactor. Zn(2+) is required as a cofactor. Mg(2+) serves as cofactor.

Its function is as follows. Broad specificity metal-dependent exopeptidase, releasing all N-terminal amino acids. The polypeptide is Aminopeptidase 2 (Geobacillus stearothermophilus (Bacillus stearothermophilus)).